We begin with the raw amino-acid sequence, 287 residues long: ATP synthase gamma chain (287 aa).

Belongs to the ATPase gamma chain family. In terms of assembly, F-type ATPases have 2 components, CF(1) - the catalytic core - and CF(0) - the membrane proton channel. CF(1) has five subunits: alpha(3), beta(3), gamma(1), delta(1), epsilon(1). CF(0) has three main subunits: a, b and c.

The protein localises to the cell membrane. Functionally, produces ATP from ADP in the presence of a proton gradient across the membrane. The gamma chain is believed to be important in regulating ATPase activity and the flow of protons through the CF(0) complex. The protein is ATP synthase gamma chain of Staphylococcus carnosus (strain TM300).